The primary structure comprises 107 residues: Guanylate cyclase activator 2B (107 aa).

A signal peptide spans methionine 1 to glycine 21. Residues valine 22 to alanine 92 constitute a propeptide that is removed on maturation. 3 disulfide bridges follow: cysteine 63/cysteine 76, cysteine 96/cysteine 104, and cysteine 99/cysteine 107.

The protein belongs to the guanylin family.

Its subcellular location is the secreted. Functionally, endogenous activator of intestinal guanylate cyclase. It stimulates this enzyme through the same receptor binding region as the heat-stable enterotoxins. May be a potent physiological regulator of intestinal fluid and electrolyte transport. May be an autocrine/paracrine regulator of intestinal salt and water transport. The chain is Guanylate cyclase activator 2B (GUCA2B) from Notomys alexis (Spinifex hopping mouse).